Reading from the N-terminus, the 364-residue chain is Dihydroorotate dehydrogenase (quinone) (364 aa).

Residues 61-65 (AGYDK) and Thr85 contribute to the FMN site. Substrate is bound at residue Lys65. Residue 110–114 (NRLGF) participates in substrate binding. Residues Asn139 and Asn170 each contribute to the FMN site. Asn170 serves as a coordination point for substrate. Ser173 serves as the catalytic Nucleophile. Asn175 is a substrate binding site. FMN contacts are provided by Lys215 and Ser243. Substrate is bound at residue 244-245 (NT). FMN is bound by residues Gly266, Gly295, and 316-317 (YT).

Belongs to the dihydroorotate dehydrogenase family. Type 2 subfamily. Monomer. The cofactor is FMN.

It is found in the cell membrane. The enzyme catalyses (S)-dihydroorotate + a quinone = orotate + a quinol. It functions in the pathway pyrimidine metabolism; UMP biosynthesis via de novo pathway; orotate from (S)-dihydroorotate (quinone route): step 1/1. Functionally, catalyzes the conversion of dihydroorotate to orotate with quinone as electron acceptor. The polypeptide is Dihydroorotate dehydrogenase (quinone) (Brucella canis (strain ATCC 23365 / NCTC 10854 / RM-666)).